A 147-amino-acid polypeptide reads, in one-letter code: Small ribosomal subunit protein uS12 (147 aa).

Residues Met1–Pro22 form a disordered region. 3-methylthioaspartic acid is present on Asp102.

It belongs to the universal ribosomal protein uS12 family. Part of the 30S ribosomal subunit. Contacts proteins S8 and S17. May interact with IF1 in the 30S initiation complex.

Its function is as follows. With S4 and S5 plays an important role in translational accuracy. In terms of biological role, interacts with and stabilizes bases of the 16S rRNA that are involved in tRNA selection in the A site and with the mRNA backbone. Located at the interface of the 30S and 50S subunits, it traverses the body of the 30S subunit contacting proteins on the other side and probably holding the rRNA structure together. The combined cluster of proteins S8, S12 and S17 appears to hold together the shoulder and platform of the 30S subunit. The sequence is that of Small ribosomal subunit protein uS12 from Streptococcus pyogenes serotype M12 (strain MGAS2096).